Reading from the N-terminus, the 370-residue chain is Phosphoserine aminotransferase (370 aa).

Arg-38 serves as a coordination point for L-glutamate. Residues Trp-101, Thr-143, Asp-166, and Gln-189 each coordinate pyridoxal 5'-phosphate. Position 190 is an N6-(pyridoxal phosphate)lysine (Lys-190). Pyridoxal 5'-phosphate is bound at residue 243-244 (NT).

This sequence belongs to the class-V pyridoxal-phosphate-dependent aminotransferase family. SerC subfamily. As to quaternary structure, homodimer. Pyridoxal 5'-phosphate is required as a cofactor.

It is found in the cytoplasm. It carries out the reaction O-phospho-L-serine + 2-oxoglutarate = 3-phosphooxypyruvate + L-glutamate. The catalysed reaction is 4-(phosphooxy)-L-threonine + 2-oxoglutarate = (R)-3-hydroxy-2-oxo-4-phosphooxybutanoate + L-glutamate. Its pathway is amino-acid biosynthesis; L-serine biosynthesis; L-serine from 3-phospho-D-glycerate: step 2/3. The protein operates within cofactor biosynthesis; pyridoxine 5'-phosphate biosynthesis; pyridoxine 5'-phosphate from D-erythrose 4-phosphate: step 3/5. Functionally, catalyzes the reversible conversion of 3-phosphohydroxypyruvate to phosphoserine and of 3-hydroxy-2-oxo-4-phosphonooxybutanoate to phosphohydroxythreonine. This Methanosarcina mazei (strain ATCC BAA-159 / DSM 3647 / Goe1 / Go1 / JCM 11833 / OCM 88) (Methanosarcina frisia) protein is Phosphoserine aminotransferase.